Reading from the N-terminus, the 246-residue chain is Carboxylesterase (246 aa).

Ser93 functions as the Nucleophile in the catalytic mechanism. Catalysis depends on charge relay system residues Asp192 and His222.

Belongs to the lipase/esterase LIP3/BchO family. In terms of assembly, homodimer.

The enzyme catalyses a carboxylic ester + H2O = an alcohol + a carboxylate + H(+). Functionally, involved in the detoxification of xenobiotics. Shows maximal activity with C6 substrates, with gradually decreasing activity from C8 to C12 substrates. No activity for higher chain length substrates acids rather than long-chain ones. The polypeptide is Carboxylesterase (est) (Geobacillus stearothermophilus (Bacillus stearothermophilus)).